We begin with the raw amino-acid sequence, 557 residues long: Dihydroxy-acid dehydratase (557 aa).

Cysteine 50 is a binding site for [2Fe-2S] cluster. Aspartate 82 is a binding site for Mg(2+). Cysteine 123 provides a ligand contact to [2Fe-2S] cluster. Mg(2+) is bound by residues aspartate 124 and lysine 125. N6-carboxylysine is present on lysine 125. Cysteine 195 is a binding site for [2Fe-2S] cluster. Glutamate 447 is a binding site for Mg(2+). Residue serine 473 is the Proton acceptor of the active site.

The protein belongs to the IlvD/Edd family. In terms of assembly, homodimer. Requires [2Fe-2S] cluster as cofactor. The cofactor is Mg(2+).

It catalyses the reaction (2R)-2,3-dihydroxy-3-methylbutanoate = 3-methyl-2-oxobutanoate + H2O. The catalysed reaction is (2R,3R)-2,3-dihydroxy-3-methylpentanoate = (S)-3-methyl-2-oxopentanoate + H2O. Its pathway is amino-acid biosynthesis; L-isoleucine biosynthesis; L-isoleucine from 2-oxobutanoate: step 3/4. It participates in amino-acid biosynthesis; L-valine biosynthesis; L-valine from pyruvate: step 3/4. In terms of biological role, functions in the biosynthesis of branched-chain amino acids. Catalyzes the dehydration of (2R,3R)-2,3-dihydroxy-3-methylpentanoate (2,3-dihydroxy-3-methylvalerate) into 2-oxo-3-methylpentanoate (2-oxo-3-methylvalerate) and of (2R)-2,3-dihydroxy-3-methylbutanoate (2,3-dihydroxyisovalerate) into 2-oxo-3-methylbutanoate (2-oxoisovalerate), the penultimate precursor to L-isoleucine and L-valine, respectively. In Metallosphaera sedula (strain ATCC 51363 / DSM 5348 / JCM 9185 / NBRC 15509 / TH2), this protein is Dihydroxy-acid dehydratase.